The sequence spans 635 residues: Endo-1,4-beta-xylanase B (635 aa).

The GH10 domain maps to 1–337; sequence MNLKTAYEPY…KEAYYAVLKA (337 aa). E150 (proton donor) is an active-site residue. E255 acts as the Nucleophile in catalysis.

Belongs to the glycosyl hydrolase 10 (cellulase F) family.

It carries out the reaction Endohydrolysis of (1-&gt;4)-beta-D-xylosidic linkages in xylans.. The protein operates within glycan degradation; xylan degradation. In terms of biological role, b.fibrisolvens is located in the rumen of ruminant animals, where it contributes to the animal's digestion of plant material by hydrolyzing hemicellulose with its xylanases. The protein is Endo-1,4-beta-xylanase B (xynB) of Butyrivibrio fibrisolvens.